A 350-amino-acid polypeptide reads, in one-letter code: Phenylalanine--tRNA ligase alpha subunit (350 aa).

Glu257 is a Mg(2+) binding site.

It belongs to the class-II aminoacyl-tRNA synthetase family. Phe-tRNA synthetase alpha subunit type 1 subfamily. Tetramer of two alpha and two beta subunits. It depends on Mg(2+) as a cofactor.

It localises to the cytoplasm. The catalysed reaction is tRNA(Phe) + L-phenylalanine + ATP = L-phenylalanyl-tRNA(Phe) + AMP + diphosphate + H(+). This Listeria monocytogenes serotype 4a (strain HCC23) protein is Phenylalanine--tRNA ligase alpha subunit.